The chain runs to 280 residues: Putative transcription factor kapC (280 aa).

The segment at 1 to 102 (MQPALAPHPS…GKRPLSTSKR (102 aa)) is disordered. Residues 39 to 49 (PQPPAPQPPHM) show a composition bias toward pro residues. Residues 79–89 (TQPDVTGQETP) show a composition bias toward polar residues. The bZIP domain occupies 96–159 (PLSTSKRAAQ…EYIINLQSRL (64 aa)). Residues 97–120 (LSTSKRAAQNRAAQRAFRQRKEAH) form a basic motif region. Positions 124 to 155 (LEGKVKAYESMGEAIKALQAENYQLREYIINL) are leucine-zipper. The tract at residues 169–280 (LPGNIDLSQP…EQTHGLPLIS (112 aa)) is disordered. Positions 197 to 206 (APPPTAPQQP) are enriched in pro residues.

The protein belongs to the bZIP family.

It localises to the nucleus. In terms of biological role, putative transcription factor. The protein is Putative transcription factor kapC (kapC) of Aspergillus fumigatus (strain ATCC MYA-4609 / CBS 101355 / FGSC A1100 / Af293) (Neosartorya fumigata).